Consider the following 498-residue polypeptide: Phosphoethanolamine N-methyltransferase 1 (498 aa).

Residues Gly-68, Arg-73, Asp-89, Asp-115, Val-116, and Asn-134 each coordinate S-adenosyl-L-homocysteine. Ser-167, Ser-172, Gly-173, Arg-177, and Tyr-184 together coordinate phosphocholine. Residues Gln-253–Tyr-254 and Tyr-262 contribute to the N-methylethanolamine phosphate site. Tyr-262 lines the phosphocholine pocket. S-adenosyl-L-homocysteine-binding residues include Val-271, Ser-272, Gly-298, Asp-320, Asp-346, Cys-347, and Arg-363. Positions 394, 408, 412, 414, and 480 each coordinate phosphocholine. Residues Tyr-394, Tyr-408, Arg-412–Tyr-414, and Lys-480 contribute to the N-methylethanolamine phosphate site.

It belongs to the class I-like SAM-binding methyltransferase superfamily. PEAMT family.

It carries out the reaction phosphoethanolamine + S-adenosyl-L-methionine = N-methylethanolamine phosphate + S-adenosyl-L-homocysteine + H(+). The catalysed reaction is N-methylethanolamine phosphate + S-adenosyl-L-methionine = N,N-dimethylethanolamine phosphate + S-adenosyl-L-homocysteine + H(+). The enzyme catalyses N,N-dimethylethanolamine phosphate + S-adenosyl-L-methionine = phosphocholine + S-adenosyl-L-homocysteine + H(+). It functions in the pathway phospholipid metabolism; phosphatidylcholine biosynthesis; phosphocholine from phosphoethanolamine: step 1/1. With respect to regulation, inhibited by phosphatidic acid. Its function is as follows. Involved in phosphocholine biosynthesis. Catalyzes the N-methylation of phosphoethanolamine, phosphomonomethylethanolamine and phosphodimethylethanolamine, the three methylation steps required to convert phosphoethanolamine to phosphocholine (PC). The chain is Phosphoethanolamine N-methyltransferase 1 from Triticum aestivum (Wheat).